Here is an 82-residue protein sequence, read N- to C-terminus: Small ribosomal subunit protein bS16 (82 aa).

This sequence belongs to the bacterial ribosomal protein bS16 family.

This chain is Small ribosomal subunit protein bS16, found in Sodalis glossinidius (strain morsitans).